Reading from the N-terminus, the 90-residue chain is uncharacterized protein (90 aa).

Residue lysine 88 forms an Isoglutamyl lysine isopeptide (Lys-Gln) (interchain with Q-Cter in protein Pup) linkage.

This is an uncharacterized protein from Mycolicibacterium smegmatis (strain ATCC 700084 / mc(2)155) (Mycobacterium smegmatis).